We begin with the raw amino-acid sequence, 384 residues long: Ribonucleoside-diphosphate reductase small chain (384 aa).

Fe cation is bound by residues D130, E161, and H164. Residue Y168 is part of the active site. 3 residues coordinate Fe cation: E224, E258, and H261.

This sequence belongs to the ribonucleoside diphosphate reductase small chain family. As to quaternary structure, heterodimer of a large and a small subunit. It depends on Fe cation as a cofactor.

The catalysed reaction is a 2'-deoxyribonucleoside 5'-diphosphate + [thioredoxin]-disulfide + H2O = a ribonucleoside 5'-diphosphate + [thioredoxin]-dithiol. Functionally, provides the precursors necessary for DNA synthesis. Catalyzes the biosynthesis of deoxyribonucleotides from the corresponding ribonucleotides. The protein is Ribonucleoside-diphosphate reductase small chain of Spisula solidissima (Atlantic surf-clam).